A 124-amino-acid chain; its full sequence is Photoactive yellow protein (124 aa).

The region spanning Ala-22–Gly-85 is the PAS domain. Residue Cys-68 is modified to S-(4-hydroxycinnamyl)cysteine.

Belongs to the photoactive yellow protein family. In terms of processing, the 4-hydroxycinnamic acid (p-coumaric acid) chromophore is covalently bound via a thioester linkage.

Its function is as follows. This photoactive protein is a photoreceptor with kinetics similar to that of rhodopsin. This chain is Photoactive yellow protein (pyp), found in Rhodobacter capsulatus (strain ATCC BAA-309 / NBRC 16581 / SB1003).